The sequence spans 368 residues: Quinolinate synthase (368 aa).

Residues H46 and S63 each contribute to the iminosuccinate site. C110 contacts [4Fe-4S] cluster. Iminosuccinate-binding positions include 141–143 (YVN) and S162. C230 is a [4Fe-4S] cluster binding site. Iminosuccinate is bound by residues 256-258 (HPE) and T273. Position 320 (C320) interacts with [4Fe-4S] cluster.

Belongs to the quinolinate synthase family. Type 3 subfamily. [4Fe-4S] cluster serves as cofactor.

It is found in the cytoplasm. It catalyses the reaction iminosuccinate + dihydroxyacetone phosphate = quinolinate + phosphate + 2 H2O + H(+). It functions in the pathway cofactor biosynthesis; NAD(+) biosynthesis; quinolinate from iminoaspartate: step 1/1. Functionally, catalyzes the condensation of iminoaspartate with dihydroxyacetone phosphate to form quinolinate. In Bacillus thuringiensis subsp. konkukian (strain 97-27), this protein is Quinolinate synthase.